A 125-amino-acid chain; its full sequence is Holo-[acyl-carrier-protein] synthase (125 aa).

Positions 8 and 57 each coordinate Mg(2+).

The protein belongs to the P-Pant transferase superfamily. AcpS family. Mg(2+) serves as cofactor.

Its subcellular location is the cytoplasm. It carries out the reaction apo-[ACP] + CoA = holo-[ACP] + adenosine 3',5'-bisphosphate + H(+). Functionally, transfers the 4'-phosphopantetheine moiety from coenzyme A to a Ser of acyl-carrier-protein. This is Holo-[acyl-carrier-protein] synthase from Thermus thermophilus (strain ATCC BAA-163 / DSM 7039 / HB27).